Reading from the N-terminus, the 117-residue chain is DNA-directed RNA polymerase II subunit RPB11 (117 aa).

An N-acetylmethionine modification is found at M1.

The protein belongs to the archaeal Rpo11/eukaryotic RPB11/RPC19 RNA polymerase subunit family. Component of the RNA polymerase II (Pol II) core complex consisting of 12 subunits: a ten-subunit catalytic core composed of POLR2A/RPB1, POLR2B/RPB2, POLR2C/RPB3, POLR2I/RPB9, POLR2J/RPB11, POLR2E/RPABC1, POLR2F/RPABC2, POLR2H/RPABC3, POLR2K/RPABC4 and POLR2L/RPABC5 and a mobile stalk composed of two subunits POLR2D/RPB4 and POLR2G/RPB7, protruding from the core and functioning primarily in transcription initiation. Part of Pol II(G) complex, in which Pol II core associates with an additional subunit POLR2M; unlike conventional Pol II, Pol II(G) functions as a transcriptional repressor. Part of TBP-based Pol II pre-initiation complex (PIC), in which Pol II core assembles with general transcription factors and other specific initiation factors including GTF2E1, GTF2E2, GTF2F1, GTF2F2, TCEA1, ERCC2, ERCC3, GTF2H2, GTF2H3, GTF2H4, GTF2H5, GTF2A1, GTF2A2, GTF2B and TBP; this large multi-subunit PIC complex mediates DNA unwinding and targets Pol II core to the transcription start site where the first phosphodiester bond forms. Interacts with PTPN6; this interaction promotes the recruitment of RNA pol II to the PCK1 promoter.

Its subcellular location is the nucleus. In terms of biological role, DNA-dependent RNA polymerase catalyzes the transcription of DNA into RNA using the four ribonucleoside triphosphates as substrates. Component of RNA polymerase II which synthesizes mRNA precursors and many functional non-coding RNAs. Pol II is the central component of the basal RNA polymerase II transcription machinery. It is composed of mobile elements that move relative to each other. POLR2J/RPB11 is part of the core element with the central large cleft. This chain is DNA-directed RNA polymerase II subunit RPB11 (POLR2J), found in Bos taurus (Bovine).